We begin with the raw amino-acid sequence, 218 residues long: Probable glutamine ABC transporter permease protein GlnP (218 aa).

3 consecutive transmembrane segments (helical) span residues 19–39 (FLVT…FGLI), 65–85 (LPLL…GIKL), and 188–208 (FFPI…SLSL). In terms of domain architecture, ABC transmembrane type-1 spans 19–210 (FLVTLYVAFI…AVNYSLSLAA (192 aa)).

Belongs to the binding-protein-dependent transport system permease family. As to quaternary structure, the complex is composed of two ATP-binding proteins (GlnQ), two transmembrane proteins (GlnM and GlnP) and a solute-binding protein (GlnH).

It is found in the cell membrane. Functionally, part of the ABC transporter complex GlnHMPQ involved in glutamine transport. Probably responsible for the translocation of the substrate across the membrane. This chain is Probable glutamine ABC transporter permease protein GlnP (glnP), found in Bacillus subtilis (strain 168).